We begin with the raw amino-acid sequence, 147 residues long: Hemoglobin subunit beta-1 (147 aa).

The Globin domain occupies 3–147 (EWTATERTHI…VVSALGRQYH (145 aa)). The heme b site is built by His-64 and His-93.

The protein belongs to the globin family. Hb 1 is a heterotetramer of two alpha-1 and two beta-1 chains. Hb 2 is a heterotetramer of two alpha-2 and two beta-1 chains. As to expression, red blood cells.

Functionally, involved in oxygen transport from gills to the various peripheral tissues. The chain is Hemoglobin subunit beta-1 (hbb1) from Boreogadus saida (Polar cod).